The following is a 129-amino-acid chain: Small ribosomal subunit protein uS11 (129 aa).

The segment at 107 to 129 (IEDVTPVPHDSIRGKGGRRGRRV) is disordered.

This sequence belongs to the universal ribosomal protein uS11 family. As to quaternary structure, part of the 30S ribosomal subunit.

Located on the platform of the 30S subunit. The chain is Small ribosomal subunit protein uS11 from Methanoculleus marisnigri (strain ATCC 35101 / DSM 1498 / JR1).